Reading from the N-terminus, the 421-residue chain is Large ribosomal subunit protein uL4 (421 aa).

At Ala-2 the chain carries N-acetylalanine. The residue at position 14 (Lys-14) is an N6-acetyllysine. Position 97 is an omega-N-methylarginine (Arg-97). Position 106 is an N6-acetyllysine (Lys-106). Residue Lys-239 forms a Glycyl lysine isopeptide (Lys-Gly) (interchain with G-Cter in SUMO2) linkage. Lys-259 is subject to N6-acetyllysine. Thr-266 carries the post-translational modification Phosphothreonine. Phosphoserine occurs at positions 290 and 295. At Arg-300 the chain carries Citrulline. Lys-327 is covalently cross-linked (Glycyl lysine isopeptide (Lys-Gly) (interchain with G-Cter in SUMO2)). An N6-acetyllysine mark is found at Lys-333 and Lys-353. Lys-364 carries the N6-acetyllysine; alternate modification. Residue Lys-364 forms a Glycyl lysine isopeptide (Lys-Gly) (interchain with G-Cter in SUMO1); alternate linkage. A Phosphoserine modification is found at Ser-365. The span at Ser-365–Pro-379 shows a compositional bias: basic and acidic residues. A disordered region spans residues Ser-365–Ala-421. A compositionally biased stretch (basic residues) spans Lys-393–Thr-404. Basic and acidic residues predominate over residues Lys-406–Ala-421.

This sequence belongs to the universal ribosomal protein uL4 family. As to quaternary structure, component of the large ribosomal subunit. May bind IPO9 with low affinity. Interacts with RBM3. Post-translationally, citrullinated by PADI4.

The protein resides in the cytoplasm. Its function is as follows. Component of the large ribosomal subunit. The ribosome is a large ribonucleoprotein complex responsible for the synthesis of proteins in the cell. This Rattus norvegicus (Rat) protein is Large ribosomal subunit protein uL4 (Rpl4).